The chain runs to 76 residues: Omega-conotoxin-like TxMKLT1-0211 (76 aa).

An N-terminal signal peptide occupies residues 1–22 (MKLTCMMIVAVLFLTAWTFVTA). Positions 23–52 (VPHSSNALENLYLKAHHEMNNPEDSELNKR) are excised as a propeptide. 3 disulfides stabilise this stretch: Cys53–Cys67, Cys60–Cys71, and Cys66–Cys75.

Belongs to the conotoxin O1 superfamily. Expressed by the venom duct.

It is found in the secreted. In terms of biological role, omega-conotoxins act at presynaptic membranes, they bind and block voltage-gated calcium channels (Cav). In Conus textile (Cloth-of-gold cone), this protein is Omega-conotoxin-like TxMKLT1-0211.